The chain runs to 394 residues: NAD(P)H-quinone oxidoreductase subunit H (394 aa).

It belongs to the complex I 49 kDa subunit family. As to quaternary structure, NDH-1 can be composed of about 15 different subunits; different subcomplexes with different compositions have been identified which probably have different functions.

The protein resides in the cellular thylakoid membrane. The catalysed reaction is a plastoquinone + NADH + (n+1) H(+)(in) = a plastoquinol + NAD(+) + n H(+)(out). The enzyme catalyses a plastoquinone + NADPH + (n+1) H(+)(in) = a plastoquinol + NADP(+) + n H(+)(out). In terms of biological role, NDH-1 shuttles electrons from an unknown electron donor, via FMN and iron-sulfur (Fe-S) centers, to quinones in the respiratory and/or the photosynthetic chain. The immediate electron acceptor for the enzyme in this species is believed to be plastoquinone. Couples the redox reaction to proton translocation, and thus conserves the redox energy in a proton gradient. Cyanobacterial NDH-1 also plays a role in inorganic carbon-concentration. The protein is NAD(P)H-quinone oxidoreductase subunit H of Trichormus variabilis (strain ATCC 29413 / PCC 7937) (Anabaena variabilis).